The sequence spans 74 residues: Progonadoliberin-3 (74 aa).

An N-terminal signal peptide occupies residues 1–15; that stretch reads VQVVVLALVAQVTLS. Pyrrolidone carboxylic acid is present on glutamine 16. Residue glycine 25 is modified to Glycine amide.

It belongs to the GnRH family.

The protein resides in the secreted. Stimulates the secretion of gonadotropins. This chain is Progonadoliberin-3 (gnrh3), found in Oncorhynchus mykiss (Rainbow trout).